The sequence spans 492 residues: Asparagine--tRNA ligase, mitochondrial (492 aa).

This sequence belongs to the class-II aminoacyl-tRNA synthetase family.

The protein resides in the mitochondrion matrix. It carries out the reaction tRNA(Asn) + L-asparagine + ATP = L-asparaginyl-tRNA(Asn) + AMP + diphosphate + H(+). Functionally, catalyzes the attachment of asparagine to tRNA(Asn) in the mitochondrion. This chain is Asparagine--tRNA ligase, mitochondrial (SLM5), found in Saccharomyces cerevisiae (strain ATCC 204508 / S288c) (Baker's yeast).